The primary structure comprises 305 residues: tRNA dimethylallyltransferase (305 aa).

Residue 11 to 18 (GPTAVGKT) participates in ATP binding. 13–18 (TAVGKT) contacts substrate. The tract at residues 36 to 39 (DSMQ) is interaction with substrate tRNA.

Belongs to the IPP transferase family. Monomer. Mg(2+) serves as cofactor.

The catalysed reaction is adenosine(37) in tRNA + dimethylallyl diphosphate = N(6)-dimethylallyladenosine(37) in tRNA + diphosphate. Catalyzes the transfer of a dimethylallyl group onto the adenine at position 37 in tRNAs that read codons beginning with uridine, leading to the formation of N6-(dimethylallyl)adenosine (i(6)A). This is tRNA dimethylallyltransferase from Listeria monocytogenes serotype 4b (strain CLIP80459).